Here is a 181-residue protein sequence, read N- to C-terminus: ATP synthase subunit delta (181 aa).

This sequence belongs to the ATPase delta chain family. F-type ATPases have 2 components, F(1) - the catalytic core - and F(0) - the membrane proton channel. F(1) has five subunits: alpha(3), beta(3), gamma(1), delta(1), epsilon(1). F(0) has three main subunits: a(1), b(2) and c(10-14). The alpha and beta chains form an alternating ring which encloses part of the gamma chain. F(1) is attached to F(0) by a central stalk formed by the gamma and epsilon chains, while a peripheral stalk is formed by the delta and b chains.

It localises to the cell inner membrane. In terms of biological role, f(1)F(0) ATP synthase produces ATP from ADP in the presence of a proton or sodium gradient. F-type ATPases consist of two structural domains, F(1) containing the extramembraneous catalytic core and F(0) containing the membrane proton channel, linked together by a central stalk and a peripheral stalk. During catalysis, ATP synthesis in the catalytic domain of F(1) is coupled via a rotary mechanism of the central stalk subunits to proton translocation. Its function is as follows. This protein is part of the stalk that links CF(0) to CF(1). It either transmits conformational changes from CF(0) to CF(1) or is implicated in proton conduction. This Chlorobaculum tepidum (strain ATCC 49652 / DSM 12025 / NBRC 103806 / TLS) (Chlorobium tepidum) protein is ATP synthase subunit delta.